The chain runs to 1765 residues: MAPQWMPQNIQKRLLKYILQQLSLFSEIDLPNLDVSLGTSSKVNLRNLELDIEKFSIPGMYMRSGSIETLSLSLTISDGVNVDCAGVNITLTPSLTPGKPNSTDQFSLAKSTADLANSVMFEDNVVEDEDIKETPSVDSNPLPPEIKDYRMSNMMAKAADMALSRLQLTVRDVKITMILETSHMEVCIEKVTLLSKEGTRYITVEGMTLNAIKPEVYSGEGVDNVDNSEERDETESEESEDYDDELMQTSFMADNKDDIHNSLMESMMFATQTSESVYMSATSNVFSSTTPRASTYENHQPSAVCVAYVSKCSVQFDGLQNIENMQVNLGRIKIAASPIPECLSSVIQSIRNLVRLSAMSTNETAGNTEKEPESDNTTLLNTLKIDEICVSFESALLKDGNFALDNTTCLSLSDIRFEQKNASFSFGSIAKIRLSRNDSKTELFCFDDSRAPNVADLGLEILNNDVSRITLICPKSLNIVVDEHLLTLAARYYSLMEPVIETLISVISTQTPYSYSNTHTSRFALHDTANNQKSNEFHAQTSSIHVKLQLNDFCITITISPITYDSQEGRFDTSSILFEYNDPTLGEQYASNQFLMISNLETSSAGVNKIRSFDSSSLQEIWLKTKIKTIVEKATLKLNFDVLIKIISSFGKLADLVRKSMVTSLPVARQKKVRMGSSLFLNATKMLKNCVEIKHCTIIFSHICPHFGDLKFSLKDIFVNFLQDGTLHSYVMSVLIQRICDSVHESLLEAADPRNKGYPMMFAKFKDNVGVHFKNCSFNYYGEWITLLESRERPREETNQSSSASSATSKKRQVNFTFADVSIGLVPVNLKSKIEVVIKKGIADLLIGTDGRSKLQSSFSSLTLLLIDDVANILSDKESKSLRHWINANNNHAIWTLNAILKSKGFVPVSYISSLFLNSTFESERHLEKRMTQAFSGQKIFASIDTKIHADALAVDLCADSCQCLIQTLKDLKQPVQFSFNEKYKPMTDEVDVFKDVDETTFSASVSVDVDNLEQTEIPENEKLEIVEDFFDKNLNSDSAEQSAIRSGSLSNSGTKSGAMSNIIFDDNHFGHSGEEFTTKVIPMAIGVSISNVTIKLYDGYDWKETQTTIKNAIRRVEDKAAKIGDNMNEVTEGSTSEHVRSVSNDSTELDTEAVNELLYESIHVGLLAGQDPQSFYDNINKSISNCGGSENVSEHNNLSPGSSSPASVNTANSTRSAASSHNIELGKVSSRRVRLKRSIYHKVLVELENLDLSNLTMVNSEPHPTKNSIVFSEDESKDDSELVSRMDLSVGSFKVVDNVPTSSWNMFVGYLREAGDKELGSSMLHAVIDTVRPVSSLAASELVISVSVLPLRLYVDQDTLDFLTRFGEFKDDRFTLPALDEEEVFIEKFQVNSVRIKLDYKPKKVDYAGIRSGHTNEFMNFFILDESEMVLKKLVLYGIPGFARLHKMLNDLWMPDIKRNQLGGVLSGLAPVKSIVKIGSGFKELVAVPLKEYEKDGRVIRGLQKGALSFAKITGGELLKFGVKLAAGTQTILESTEEALGGDGSAVRLPGYKKNTKSRRRTSPSEVIYATSRERSLFGHNTMSGAVFHRNSFDSYGEEEEFLEGAPALDGAGTQDAEQHQKSRFLVPAVFKSTAELPDVLESDSDLDDYYDESDNEGQKIVSLYSNQPENLNEGLQTAYTSLGRNLDTAREAIVSASTRAARSGSAQTAAREFAKATPIMVIRPIIGTTEAISRTLQGGINILDPEEKRRSEEKYKNTKKEAG.

Disordered regions lie at residues 218-243 (SGEG…EDYD), 1188-1224 (GGSE…SHNI), and 1746-1765 (DPEE…KEAG). The segment covering 226–243 (DNSEERDETESEESEDYD) has biased composition (acidic residues). Residues 1188–1206 (GGSENVSEHNNLSPGSSSP) are compositionally biased toward polar residues. Positions 1207–1221 (ASVNTANSTRSAASS) are enriched in low complexity. Positions 1747–1765 (PEEKRRSEEKYKNTKKEAG) are enriched in basic and acidic residues.

This sequence belongs to the ATG2 family.

The protein resides in the preautophagosomal structure membrane. It is found in the endoplasmic reticulum membrane. It carries out the reaction a 1,2-diacyl-sn-glycero-3-phosphocholine(in) = a 1,2-diacyl-sn-glycero-3-phosphocholine(out). The catalysed reaction is a 1,2-diacyl-sn-glycero-3-phospho-L-serine(in) = a 1,2-diacyl-sn-glycero-3-phospho-L-serine(out). The enzyme catalyses a 1,2-diacyl-sn-glycero-3-phosphoethanolamine(in) = a 1,2-diacyl-sn-glycero-3-phosphoethanolamine(out). Lipid transfer protein required for autophagosome completion and peroxisome degradation and peroxisome degradation. Tethers the edge of the isolation membrane (IM) to the endoplasmic reticulum (ER) and mediates direct lipid transfer from ER to IM for IM expansion. ATG2 binds to the ER exit site (ERES), which is the membrane source for autophagosome formation, using basic residues in its N-terminal region (NR) and to the expanding edge of the IM through its C-terminal region. The latter binding is assisted by an ATG18-PtdIns3P interaction. ATG2 then extracts phospholipids from the membrane source using its NR and transfers them to ATG9 to the IM through its predicted beta-sheet-rich structure for membrane expansion. This is Autophagy-related protein 2 (ATG2) from Pichia angusta (Yeast).